A 365-amino-acid chain; its full sequence is Transcription factor aptf-1 (365 aa).

2 disordered regions span residues 13 to 40 and 93 to 126; these read EFVR…PFYE and TPPQ…SNYS. Positions 223–356 are H-S-H (helix-span-helix), dimerization; it reads RRKQANVTAW…MIDESIKYID (134 aa).

Belongs to the AP-2 family. As to quaternary structure, binds DNA as a dimer. In terms of tissue distribution, expressed in five interneurons AIB, RIB and RIS.

Its subcellular location is the nucleus. In terms of biological role, transcription factor, which is required in the single sleep-active ring interneuron RIS for sleep-like behavioral quiescence induced by neuropeptide signaling in larvae. Regulates gene expression of sleep-inducing FMRFamide-like neuropeptide flp-11 in RIS. This chain is Transcription factor aptf-1, found in Caenorhabditis elegans.